We begin with the raw amino-acid sequence, 1407 residues long: MKDLLKFLKAQTKTEEFDAIKIALASPDMIRSWSFGEVKKPETINYRTFKPERDGLFCARIFGPVKDYECLCGKYKRLKHRGVICEKCGVEVTQTKVRRERMGHIELASPTAHIWFLKSLPSRIGLLLDMPLRDIERVLYFESYVVIEGGMTNLERQQILTEEQYLDALEEFGDEFDAKMGAEAIQALLKSMDLEQECEQLREELNETNSETKRKKLTKRIKLLEAFVQSGNKPEWMILTVLPVLPPDLRPLVPLDGGRFATSDLNDLYRRVINRNNRLKRLLDLAAPDIIVRNEKRMLQEAVDALLDNGRRGRAITGSNKRPLKSLADMIKGKQGRFRQNLLGKRVDYSGRSVITVGPYLRLHQCGLPKKMALELFKPFIYGKLELRGLATTIKAAKKMVEREEAVVWDILDEVIREHPVLLNRAPTLHRLGIQAFEPVLIEGKAIQLHPLVCAAYNADFDGDQMAVHVPLTLEAQLEARALMMSTNNILSPANGEPIIVPSQDVVLGLYYMTRDCVNAKGEGMVLTGPKEAERLYRSGLASLHARVKVRITEYEKDANGELVAKTSLKDTTVGRAILWMIVPKGLPYTIVNQALGKKAISKMLNTCYRILGLKPTVIFADQIMYTGFAYAARSGASVGIDDMVIPEKKHEIISEAEAEVAEIQEQFQSGLVTAGERYNKVIDIWAAANDRVSKAMMDNLQTETVINRDGQEEKQVSFNSIYMMADSGARGSAAQIRQLAGMRGLMAKPDGSIIETPITANFREGLNVLQYFISTHGARKGLADTALKTANSGYLTRRLVDVAQDLVVTEDDCGTHEGIMMTPVIEGGDVKEPLRDRVLGRVTAEDVLKPGTADILVPRNTLLHEQWCDLLEENSVDAVKVRSVVSCDTDFGVCAHCYGRDLARGHLINKGEAIGVIAAQSIGEPGTQLTMRTFHIGGAASRAAAESSIQVKNKGSIKLSNVKSVVNSSGKLVITSRNTELKLIDEFGRTKESYKVPYGAVLAKGDGEQVAGGETVANWDPHTMPVITEVSGFVRFTDMIDGQTITRQTDELTGLSSLVVLDSAERTAGGKDLRPALKIVDAQGNDVLIPGTDMPAQYFLPGKAIVQLEDGVQISSGDTLARIPQESGGTKDITGGLPRVADLFEARRPKEPAILAEISGIVSFGKETKGKRRLVITPVDGSDPYEEMIPKWRQLNVFEGERVERGDVISDGPEAPHDILRLRGVHAVTRYIVNEVQDVYRLQGVKINDKHIEVIVRQMLRKATIVNAGSSDFLEGEQVEYSRVKIANRELEANGKVGATYSRDLLGITKASLATESFISAASFQETTRVLTEAAVAGKRDELRGLKENVIVGRLIPAGTGYAYHQDRMRRRAAGEAPAAPQVTAEDASASLAELLNAGLGGSDNE.

Zn(2+) contacts are provided by cysteine 70, cysteine 72, cysteine 85, and cysteine 88. Residues aspartate 460, aspartate 462, and aspartate 464 each coordinate Mg(2+). 4 residues coordinate Zn(2+): cysteine 814, cysteine 888, cysteine 895, and cysteine 898. Lysine 972 is modified (N6-acetyllysine).

It belongs to the RNA polymerase beta' chain family. The RNAP catalytic core consists of 2 alpha, 1 beta, 1 beta' and 1 omega subunit. When a sigma factor is associated with the core the holoenzyme is formed, which can initiate transcription. It depends on Mg(2+) as a cofactor. Zn(2+) serves as cofactor.

The enzyme catalyses RNA(n) + a ribonucleoside 5'-triphosphate = RNA(n+1) + diphosphate. Functionally, DNA-dependent RNA polymerase catalyzes the transcription of DNA into RNA using the four ribonucleoside triphosphates as substrates. The protein is DNA-directed RNA polymerase subunit beta' of Escherichia coli (strain SMS-3-5 / SECEC).